A 780-amino-acid polypeptide reads, in one-letter code: ATP-dependent 6-phosphofructokinase, muscle type (780 aa).

Position 2 is an N-acetylthreonine (threonine 2). The interval 2-390 (THEEHHAAKT…NWEVYKLLAH (389 aa)) is N-terminal catalytic PFK domain 1. ATP-binding positions include glycine 25, 88 to 89 (RC), and 118 to 121 (GDGS). Aspartate 119 is a Mg(2+) binding site. Serine 133 bears the Phosphoserine mark. Substrate is bound by residues 164–166 (SID), arginine 201, 208–210 (MGR), glutamate 264, arginine 292, and 298–301 (HVQR). The active-site Proton acceptor is the aspartate 166. Position 377 is a phosphoserine (serine 377). Residues 391-401 (VRPPVSKSGSH) form an interdomain linker region. Residues 402-780 (TVAVMNVGAP…TRKRSGEGAV (379 aa)) are C-terminal regulatory PFK domain 2. Residues arginine 471 and 528–532 (TVSNN) contribute to the beta-D-fructose 2,6-bisphosphate site. O-linked (GlcNAc) serine glycosylation occurs at serine 530. At lysine 557 the chain carries N6-(2-hydroxyisobutyryl)lysine. Beta-D-fructose 2,6-bisphosphate-binding positions include arginine 566, 573–575 (MGG), glutamate 629, arginine 655, and 661–664 (HMQQ). Serine 667 carries the phosphoserine modification. Arginine 735 is a beta-D-fructose 2,6-bisphosphate binding site. Serine 775 carries the post-translational modification Phosphoserine.

Belongs to the phosphofructokinase type A (PFKA) family. ATP-dependent PFK group I subfamily. Eukaryotic two domain clade 'E' sub-subfamily. As to quaternary structure, homo- and heterotetramers. Phosphofructokinase (PFK) enzyme functions as a tetramer composed of different combinations of 3 types of subunits, called PFKM (M), PFKL (L) and PFKP (P). The composition of the PFK tetramer differs according to the tissue type it is present in. The kinetic and regulatory properties of the tetrameric enzyme are dependent on the subunit composition, hence can vary across tissues. Interacts (via C-terminus) with HK1 (via N-terminal spermatogenic cell-specific region). It depends on Mg(2+) as a cofactor. Post-translationally, glcNAcylation decreases enzyme activity.

Its subcellular location is the cytoplasm. It carries out the reaction beta-D-fructose 6-phosphate + ATP = beta-D-fructose 1,6-bisphosphate + ADP + H(+). It functions in the pathway carbohydrate degradation; glycolysis; D-glyceraldehyde 3-phosphate and glycerone phosphate from D-glucose: step 3/4. Its activity is regulated as follows. Allosterically activated by ADP, AMP, or fructose 2,6-bisphosphate, and allosterically inhibited by ATP or citrate. Catalyzes the phosphorylation of D-fructose 6-phosphate to fructose 1,6-bisphosphate by ATP, the first committing step of glycolysis. In Macaca fascicularis (Crab-eating macaque), this protein is ATP-dependent 6-phosphofructokinase, muscle type (PFKM).